Reading from the N-terminus, the 314-residue chain is MVTETLSRKADYNANKLRKRLRRLVGTAIADFNMIEKGDRVMVCLSGGKDSYALLDILRNLQAHAPLDFELIAVNLDQKQPGFPEHVLPGYLSEINMPFRIVEQDTYSVVKRVIAEGKTTCSLCSRLRRGVLYRVATELGATKIALGHHRDDILETFFLNMFYGGKLKAMPPKLVSDDGCHVVIRPLAYCKEKDLAAYAWHAQFPIIPCNLCGSQPNLQRQVIKEMMQQWDKKYPGRLETMFTALQNIQLSHLADTSRYDFVGLKPHGIAIEEGDKAFDEEPLSVIPVDMDHDDDSTFEPENEHDGGAVQGGVI.

A PP-loop motif motif is present at residues 46–51 (SGGKDS). Cys-121, Cys-124, and Cys-212 together coordinate [4Fe-4S] cluster.

The protein belongs to the TtcA family. Homodimer. Mg(2+) serves as cofactor. [4Fe-4S] cluster is required as a cofactor.

Its subcellular location is the cytoplasm. The enzyme catalyses cytidine(32) in tRNA + S-sulfanyl-L-cysteinyl-[cysteine desulfurase] + AH2 + ATP = 2-thiocytidine(32) in tRNA + L-cysteinyl-[cysteine desulfurase] + A + AMP + diphosphate + H(+). Its pathway is tRNA modification. Functionally, catalyzes the ATP-dependent 2-thiolation of cytidine in position 32 of tRNA, to form 2-thiocytidine (s(2)C32). The sulfur atoms are provided by the cysteine/cysteine desulfurase (IscS) system. The sequence is that of tRNA-cytidine(32) 2-sulfurtransferase from Nitrosomonas europaea (strain ATCC 19718 / CIP 103999 / KCTC 2705 / NBRC 14298).